The chain runs to 704 residues: Elongation factor G (704 aa).

Positions 8–291 (DKVRNIGIMA…AVVDYLASPL (284 aa)) constitute a tr-type G domain. GTP is bound by residues 17-24 (AHIDAGKT), 90-94 (DTPGH), and 144-147 (NKMD).

It belongs to the TRAFAC class translation factor GTPase superfamily. Classic translation factor GTPase family. EF-G/EF-2 subfamily.

It localises to the cytoplasm. Catalyzes the GTP-dependent ribosomal translocation step during translation elongation. During this step, the ribosome changes from the pre-translocational (PRE) to the post-translocational (POST) state as the newly formed A-site-bound peptidyl-tRNA and P-site-bound deacylated tRNA move to the P and E sites, respectively. Catalyzes the coordinated movement of the two tRNA molecules, the mRNA and conformational changes in the ribosome. This chain is Elongation factor G, found in Chlorobium phaeovibrioides (strain DSM 265 / 1930) (Prosthecochloris vibrioformis (strain DSM 265)).